The chain runs to 132 residues: Ribonuclease P protein component (132 aa).

It belongs to the RnpA family. Consists of a catalytic RNA component (M1 or rnpB) and a protein subunit.

The enzyme catalyses Endonucleolytic cleavage of RNA, removing 5'-extranucleotides from tRNA precursor.. In terms of biological role, RNaseP catalyzes the removal of the 5'-leader sequence from pre-tRNA to produce the mature 5'-terminus. It can also cleave other RNA substrates such as 4.5S RNA. The protein component plays an auxiliary but essential role in vivo by binding to the 5'-leader sequence and broadening the substrate specificity of the ribozyme. The polypeptide is Ribonuclease P protein component (Marinobacter nauticus (strain ATCC 700491 / DSM 11845 / VT8) (Marinobacter aquaeolei)).